Here is a 196-residue protein sequence, read N- to C-terminus: Gastrula zinc finger protein XlCGF64.1 (196 aa).

7 C2H2-type zinc fingers span residues 6–28, 34–56, 62–84, 90–112, 118–140, 146–168, and 174–196; these read YECP…QRGH, FMCT…QFIH, YVCT…QRGH, FTCT…QFIH, YECT…QRGH, and LMCT…KLSH.

Belongs to the krueppel C2H2-type zinc-finger protein family.

The protein localises to the nucleus. Its function is as follows. May be involved in transcriptional regulation. This Xenopus laevis (African clawed frog) protein is Gastrula zinc finger protein XlCGF64.1.